A 427-amino-acid polypeptide reads, in one-letter code: Heterogeneous nuclear ribonucleoprotein K (427 aa).

A disordered region spans residues 1 to 34 (METEQQEETFTNTETNGKRPAEDMEEEQAFKRSR). Residues 16 to 34 (NGKRPAEDMEEEQAFKRSR) are compositionally biased toward basic and acidic residues. KH domains follow at residues 39–101 (MVEL…LKKI) and 117–182 (DCEL…IKII). A run of 2 repeats spans residues 51–73 (AGAVIGKGGKNIKALRTDYNASV) and 56–59 (GKGG). Positions 51 to 385 (AGAVIGKGGK…QIRHESGASI (335 aa)) are 2 X 22 AA approximate repeats. Positions 56–371 (GKGGKNIKAL…LAGSIIGKGG (316 aa)) are 5 X 4 AA repeats of G-X-G-G. The segment at 209–246 (YGGFTMMFDDRRGRPVGFPMRGRGGFDRMPPNRGGRPM) is RNA-binding RGG-box. A run of 3 repeats spans residues 218–223 (DRRGRP), 230–233 (GRGG), and 240–243 (NRGG). Positions 218-302 (DRRGRPVGFP…LMSYDRRGRP (85 aa)) are 2 X 6 AA approximate repeats. The disordered stretch occupies residues 221–305 (GRPVGFPMRG…YDRRGRPGDR (85 aa)). The span at 249 to 258 (SRRDYDDMSP) shows a compositional bias: basic and acidic residues. 4 tandem repeats follow at residues 268–271 (GRGG), 297–302 (DRRGRP), 363–385 (AGSIIGKGGQRIKQIRHESGASI), and 368–371 (GKGG). The span at 295–305 (SYDRRGRPGDR) shows a compositional bias: basic and acidic residues. The region spanning 351–415 (IITTQVTIPK…DQIQNAQYLL (65 aa)) is the KH 3 domain.

It localises to the cytoplasm. It is found in the nucleus. The protein resides in the nucleoplasm. In terms of biological role, one of the major pre-mRNA-binding proteins. Binds tenaciously to poly(C) sequences. Likely to play a role in the nuclear metabolism of hnRNAs, particularly for pre-mRNAs that contain cytidine-rich sequences. Can also bind poly(C) single-stranded DNA. May play an important role in p53/TP53 response to DNA damage, acting at the level of both transcription activation and repression. As part of a ribonucleoprotein complex, may negatively regulate the transcription of genes involved in neuronal differentiation. The polypeptide is Heterogeneous nuclear ribonucleoprotein K (HNRNPK) (Gallus gallus (Chicken)).